We begin with the raw amino-acid sequence, 349 residues long: Isopentenyl-diphosphate delta-isomerase (349 aa).

A substrate-binding site is contributed by 9–10 (RK). FMN is bound by residues 65-67 (AMT), Ser95, and Asn124. 95-97 (STH) lines the substrate pocket. Gln154 is a substrate binding site. Glu155 is a binding site for Mg(2+). FMN-binding positions include Lys186, Ser211, Thr216, 262–264 (GLR), and 283–284 (SR).

This sequence belongs to the IPP isomerase type 2 family. Homooctamer. Dimer of tetramers. FMN is required as a cofactor. The cofactor is NADPH. Requires Mg(2+) as cofactor.

Its subcellular location is the cytoplasm. The enzyme catalyses isopentenyl diphosphate = dimethylallyl diphosphate. Its function is as follows. Involved in the biosynthesis of isoprenoids. Catalyzes the 1,3-allylic rearrangement of the homoallylic substrate isopentenyl (IPP) to its allylic isomer, dimethylallyl diphosphate (DMAPP). The polypeptide is Isopentenyl-diphosphate delta-isomerase (Staphylococcus epidermidis (strain ATCC 35984 / DSM 28319 / BCRC 17069 / CCUG 31568 / BM 3577 / RP62A)).